Reading from the N-terminus, the 266-residue chain is uncharacterized protein (266 aa).

Residues 13–33 (IIGLMLIIFAGILFYAYILQH) form a helical membrane-spanning segment.

The protein belongs to the LicD transferase family.

The protein localises to the membrane. This is an uncharacterized protein from Rickettsia prowazekii (strain Madrid E).